The chain runs to 27 residues: Palustrin-1d (27 aa).

Cys21 and Cys27 are oxidised to a cystine.

As to expression, expressed by the skin glands.

The protein resides in the secreted. Antimicrobial activity against Gram-negative bacterium E.coli. In Lithobates palustris (Pickerel frog), this protein is Palustrin-1d.